A 395-amino-acid polypeptide reads, in one-letter code: Flap endonuclease 1 (395 aa).

The segment at 1–104 (MGIKHLYQII…GELAKRIARK (104 aa)) is N-domain. A Mg(2+)-binding site is contributed by aspartate 34. DNA is bound by residues arginine 47 and arginine 70. Position 86 (aspartate 86) interacts with Mg(2+). A disordered region spans residues 103-123 (RKQEAAEQHEEAKETGTTEDV). The tract at residues 122-253 (DVEKFSRRTV…NTALKLIRDH (132 aa)) is I-domain. Mg(2+) is bound by residues glutamate 158, glutamate 160, aspartate 179, and aspartate 181. Glutamate 158 contacts DNA. DNA-binding residues include glycine 231 and aspartate 233. Residue aspartate 233 coordinates Mg(2+). Positions 341–349 (QQSRLEGFF) are interaction with PCNA. Basic and acidic residues predominate over residues 356-389 (DEEKASLKRKHEEKLEAAKKKKKEDAKAKREAKS). The interval 356–395 (DEEKASLKRKHEEKLEAAKKKKKEDAKAKREAKSRPKGTA) is disordered.

It belongs to the XPG/RAD2 endonuclease family. FEN1 subfamily. As to quaternary structure, interacts with PCNA. Three molecules of FEN1 bind to one PCNA trimer with each molecule binding to one PCNA monomer. PCNA stimulates the nuclease activity without altering cleavage specificity. It depends on Mg(2+) as a cofactor. In terms of processing, phosphorylated. Phosphorylation upon DNA damage induces relocalization to the nuclear plasma.

It is found in the nucleus. Its subcellular location is the nucleolus. The protein localises to the nucleoplasm. It localises to the mitochondrion. Its function is as follows. Structure-specific nuclease with 5'-flap endonuclease and 5'-3' exonuclease activities involved in DNA replication and repair. During DNA replication, cleaves the 5'-overhanging flap structure that is generated by displacement synthesis when DNA polymerase encounters the 5'-end of a downstream Okazaki fragment. It enters the flap from the 5'-end and then tracks to cleave the flap base, leaving a nick for ligation. Also involved in the long patch base excision repair (LP-BER) pathway, by cleaving within the apurinic/apyrimidinic (AP) site-terminated flap. Acts as a genome stabilization factor that prevents flaps from equilibrating into structures that lead to duplications and deletions. Also possesses 5'-3' exonuclease activity on nicked or gapped double-stranded DNA, and exhibits RNase H activity. Also involved in replication and repair of rDNA and in repairing mitochondrial DNA. The polypeptide is Flap endonuclease 1 (Uncinocarpus reesii (strain UAMH 1704)).